Consider the following 187-residue polypeptide: MKKIKEVIVVEGKDDTKRLALAVDADTLETNGSAISEATLAQIKTLQASRGVIVFTDPDFSGERIRKTISAAVPGVKHAFLPRKAGVPTKAGGSLGVEHASPAAIQTALAHLYTEQIDEPQQLISHHDLIAAGLLAGPTARQRREQLGERLGIGYVNGKQLPKRLQLFQIQPADFWAAVDQLTTEEK.

One can recognise a Toprim domain in the interval 5-88 (KEVIVVEGKD…AFLPRKAGVP (84 aa)). Mg(2+)-binding residues include glutamate 11, aspartate 57, and aspartate 59.

This sequence belongs to the ribonuclease M5 family. Mg(2+) is required as a cofactor.

It is found in the cytoplasm. It catalyses the reaction Endonucleolytic cleavage of RNA, removing 21 and 42 nucleotides, respectively, from the 5'- and 3'-termini of a 5S-rRNA precursor.. In terms of biological role, required for correct processing of both the 5' and 3' ends of 5S rRNA precursor. Cleaves both sides of a double-stranded region yielding mature 5S rRNA in one step. The protein is Ribonuclease M5 of Lactiplantibacillus plantarum (strain ATCC BAA-793 / NCIMB 8826 / WCFS1) (Lactobacillus plantarum).